The following is a 452-amino-acid chain: GTPase Der (452 aa).

2 EngA-type G domains span residues 4–169 (PVVA…PPAA) and 177–352 (IKVA…ESHR). GTP contacts are provided by residues 10-17 (GRPNVGKS), 57-61 (DTGGL), 120-123 (NKCE), 183-190 (GRPNVGKS), 230-234 (DTAGI), and 295-298 (NKWD). The KH-like domain maps to 353–438 (RRVSTSVIND…PIRLIWRGKP (86 aa)).

The protein belongs to the TRAFAC class TrmE-Era-EngA-EngB-Septin-like GTPase superfamily. EngA (Der) GTPase family. As to quaternary structure, associates with the 50S ribosomal subunit.

In terms of biological role, GTPase that plays an essential role in the late steps of ribosome biogenesis. This chain is GTPase Der, found in Microcystis aeruginosa (strain NIES-843 / IAM M-2473).